The primary structure comprises 92 residues: Small ribosomal subunit protein uS19 (92 aa).

This sequence belongs to the universal ribosomal protein uS19 family.

In terms of biological role, protein S19 forms a complex with S13 that binds strongly to the 16S ribosomal RNA. The chain is Small ribosomal subunit protein uS19 from Buchnera aphidicola subsp. Schizaphis graminum (strain Sg).